Reading from the N-terminus, the 442-residue chain is D-serine dehydratase 1 (442 aa).

Lys-118 is subject to N6-(pyridoxal phosphate)lysine.

Belongs to the serine/threonine dehydratase family. DsdA subfamily. Monomer. It depends on pyridoxal 5'-phosphate as a cofactor.

The catalysed reaction is D-serine = pyruvate + NH4(+). In Escherichia coli O6:K15:H31 (strain 536 / UPEC), this protein is D-serine dehydratase 1.